A 924-amino-acid polypeptide reads, in one-letter code: DNA repair and recombination protein RDH54 (924 aa).

Basic and acidic residues predominate over residues 1–10 (MQIPKYENKP). Disordered regions lie at residues 1–21 (MQIP…GSNK) and 155–183 (EALS…NDGG). Residues 168-178 (TTSTTETVPST) are compositionally biased toward low complexity. One can recognise a Helicase ATP-binding domain in the interval 299–487 (LENDSDISGC…FTIIDFINPG (189 aa)). 346 to 353 (IPLTGLCK) is a binding site for ATP. The DEGH box signature appears at 472–475 (NDLN). Lys615 participates in a covalent cross-link: Glycyl lysine isopeptide (Lys-Gly) (interchain with G-Cter in ubiquitin). A Helicase C-terminal domain is found at 631–790 (KLRVLMTLLE…DSEMRNKESS (160 aa)).

It belongs to the SNF2/RAD54 helicase family. In terms of assembly, interacts with RAD51 and DMC1.

It localises to the nucleus. It carries out the reaction ATP + H2O = ADP + phosphate + H(+). Its function is as follows. Involved in the recombinational repair of double-strand breaks (DSB) in DNA during mitosis and meiosis. Has DNA dependent ATPase activity. Promotes D-loop (displacement loop) formation with RAD51 recombinase. Modifies the topology of double-stranded DNA during the D-loop reaction to facilitate the invasion of the homologous duplex molecule by the initiating single-stranded DNA substrate. Required for adaptation from G2/M checkpoint arrest induced by a double strand break, by participating in monitoring the extent of single-stranded DNA produced by resection of DNA ends. This role is distinct from its roles in recombination. Promotes colocalization of RAD51 and DMC1 during meiotic recombination. Involved in crossover interference. The polypeptide is DNA repair and recombination protein RDH54 (RDH54) (Saccharomyces cerevisiae (strain RM11-1a) (Baker's yeast)).